The primary structure comprises 396 residues: Phosphoglycerate kinase (396 aa).

Residues 21–23, Arg36, 59–62, Arg118, and Arg151 contribute to the substrate site; these read DFN and HLGR. Residues Lys201, Gly292, Glu323, and 349–352 each bind ATP; that span reads GGDS.

It belongs to the phosphoglycerate kinase family. As to quaternary structure, monomer.

Its subcellular location is the cytoplasm. It catalyses the reaction (2R)-3-phosphoglycerate + ATP = (2R)-3-phospho-glyceroyl phosphate + ADP. Its pathway is carbohydrate degradation; glycolysis; pyruvate from D-glyceraldehyde 3-phosphate: step 2/5. The chain is Phosphoglycerate kinase from Leptospira interrogans serogroup Icterohaemorrhagiae serovar copenhageni (strain Fiocruz L1-130).